Consider the following 386-residue polypeptide: Succinate--CoA ligase [ADP-forming] subunit beta (386 aa).

One can recognise an ATP-grasp domain in the interval 9–244 (KDLLTAYQLP…PSQENIRDVL (236 aa)). ATP contacts are provided by residues Lys46, 53–55 (GRG), Val102, and Glu107. Asn199 and Asp213 together coordinate Mg(2+). Substrate is bound by residues Asn264 and 321–323 (GIM).

It belongs to the succinate/malate CoA ligase beta subunit family. Heterotetramer of two alpha and two beta subunits. Mg(2+) is required as a cofactor.

The catalysed reaction is succinate + ATP + CoA = succinyl-CoA + ADP + phosphate. The enzyme catalyses GTP + succinate + CoA = succinyl-CoA + GDP + phosphate. The protein operates within carbohydrate metabolism; tricarboxylic acid cycle; succinate from succinyl-CoA (ligase route): step 1/1. In terms of biological role, succinyl-CoA synthetase functions in the citric acid cycle (TCA), coupling the hydrolysis of succinyl-CoA to the synthesis of either ATP or GTP and thus represents the only step of substrate-level phosphorylation in the TCA. The beta subunit provides nucleotide specificity of the enzyme and binds the substrate succinate, while the binding sites for coenzyme A and phosphate are found in the alpha subunit. This chain is Succinate--CoA ligase [ADP-forming] subunit beta, found in Chlamydia trachomatis serovar A (strain ATCC VR-571B / DSM 19440 / HAR-13).